We begin with the raw amino-acid sequence, 569 residues long: Proline--tRNA ligase (569 aa).

Belongs to the class-II aminoacyl-tRNA synthetase family. ProS type 1 subfamily. In terms of assembly, homodimer.

The protein resides in the cytoplasm. The enzyme catalyses tRNA(Pro) + L-proline + ATP = L-prolyl-tRNA(Pro) + AMP + diphosphate. Catalyzes the attachment of proline to tRNA(Pro) in a two-step reaction: proline is first activated by ATP to form Pro-AMP and then transferred to the acceptor end of tRNA(Pro). As ProRS can inadvertently accommodate and process non-cognate amino acids such as alanine and cysteine, to avoid such errors it has two additional distinct editing activities against alanine. One activity is designated as 'pretransfer' editing and involves the tRNA(Pro)-independent hydrolysis of activated Ala-AMP. The other activity is designated 'posttransfer' editing and involves deacylation of mischarged Ala-tRNA(Pro). The misacylated Cys-tRNA(Pro) is not edited by ProRS. The chain is Proline--tRNA ligase from Colwellia psychrerythraea (strain 34H / ATCC BAA-681) (Vibrio psychroerythus).